A 410-amino-acid polypeptide reads, in one-letter code: Arginine deiminase (410 aa).

Residue C400 is the Amidino-cysteine intermediate of the active site.

This sequence belongs to the arginine deiminase family.

Its subcellular location is the cytoplasm. The enzyme catalyses L-arginine + H2O = L-citrulline + NH4(+). The protein operates within amino-acid degradation; L-arginine degradation via ADI pathway; carbamoyl phosphate from L-arginine: step 1/2. This Bacillus cereus (strain G9842) protein is Arginine deiminase.